The sequence spans 216 residues: MNLILMGLPGAGKGTQAEQIVAKYNIPHISTGDMFRAAMKAETELGLQAKSFIDKGALVPDEVTIGIVRERLSQEDCIKGFLLDGFPRTVAQASALEEIMKDLGKKIDYVLNINVDSGLLLTRLTGRRICKECGATYHLEFNPPAKADVCDKCGGELYQRSDDNEETVANRLDVNIKQTKPLLDFYEELGYLQSINGEQDINKVFADIDVLIGGLA.

ATP is bound at residue 10-15 (GAGKGT). The interval 30–59 (STGDMFRAAMKAETELGLQAKSFIDKGALV) is NMP. AMP is bound by residues threonine 31, arginine 36, 57–59 (ALV), 85–88 (GFPR), and glutamine 92. The tract at residues 126–163 (GRRICKECGATYHLEFNPPAKADVCDKCGGELYQRSDD) is LID. Residue arginine 127 participates in ATP binding. Residues cysteine 130 and cysteine 133 each contribute to the Zn(2+) site. 136–137 (TY) lines the ATP pocket. 2 residues coordinate Zn(2+): cysteine 150 and cysteine 153. AMP is bound by residues arginine 160 and arginine 171. Glutamine 199 contributes to the ATP binding site.

It belongs to the adenylate kinase family. Monomer.

Its subcellular location is the cytoplasm. The enzyme catalyses AMP + ATP = 2 ADP. Its pathway is purine metabolism; AMP biosynthesis via salvage pathway; AMP from ADP: step 1/1. Functionally, catalyzes the reversible transfer of the terminal phosphate group between ATP and AMP. Plays an important role in cellular energy homeostasis and in adenine nucleotide metabolism. This is Adenylate kinase from Bacillus mycoides (strain KBAB4) (Bacillus weihenstephanensis).